The sequence spans 115 residues: Large ribosomal subunit protein uL18 (115 aa).

Belongs to the universal ribosomal protein uL18 family. In terms of assembly, part of the 50S ribosomal subunit; part of the 5S rRNA/L5/L18/L25 subcomplex. Contacts the 5S and 23S rRNAs.

In terms of biological role, this is one of the proteins that bind and probably mediate the attachment of the 5S RNA into the large ribosomal subunit, where it forms part of the central protuberance. This is Large ribosomal subunit protein uL18 from Rickettsia rickettsii (strain Iowa).